Here is a 353-residue protein sequence, read N- to C-terminus: Ribosomal RNA large subunit methyltransferase M (353 aa).

S-adenosyl-L-methionine contacts are provided by residues Ser179, Ala212 to Gly215, Asp231, Asp251, and Asp267. Lys296 (proton acceptor) is an active-site residue.

It belongs to the class I-like SAM-binding methyltransferase superfamily. RNA methyltransferase RlmE family. RlmM subfamily. Monomer.

Its subcellular location is the cytoplasm. The enzyme catalyses cytidine(2498) in 23S rRNA + S-adenosyl-L-methionine = 2'-O-methylcytidine(2498) in 23S rRNA + S-adenosyl-L-homocysteine + H(+). Functionally, catalyzes the 2'-O-methylation at nucleotide C2498 in 23S rRNA. The sequence is that of Ribosomal RNA large subunit methyltransferase M from Laribacter hongkongensis (strain HLHK9).